The following is a 79-amino-acid chain: Translational regulator CsrA (79 aa).

This sequence belongs to the CsrA/RsmA family. As to quaternary structure, homodimer; the beta-strands of each monomer intercalate to form a hydrophobic core, while the alpha-helices form wings that extend away from the core.

The protein localises to the cytoplasm. A translational regulator that binds mRNA to regulate translation initiation and/or mRNA stability. Usually binds in the 5'-UTR at or near the Shine-Dalgarno sequence preventing ribosome-binding, thus repressing translation. Its main target seems to be the major flagellin gene, while its function is anatagonized by FliW. This is Translational regulator CsrA from Maridesulfovibrio salexigens (strain ATCC 14822 / DSM 2638 / NCIMB 8403 / VKM B-1763) (Desulfovibrio salexigens).